We begin with the raw amino-acid sequence, 261 residues long: 5-oxoprolinase subunit A (261 aa).

The protein belongs to the LamB/PxpA family. In terms of assembly, forms a complex composed of PxpA, PxpB and PxpC.

The enzyme catalyses 5-oxo-L-proline + ATP + 2 H2O = L-glutamate + ADP + phosphate + H(+). Catalyzes the cleavage of 5-oxoproline to form L-glutamate coupled to the hydrolysis of ATP to ADP and inorganic phosphate. The protein is 5-oxoprolinase subunit A of Symbiobacterium thermophilum (strain DSM 24528 / JCM 14929 / IAM 14863 / T).